We begin with the raw amino-acid sequence, 38 residues long: MKVRPSVKKMCEHCKVVRRKGRVMIICSANPKHKQRQG.

This sequence belongs to the bacterial ribosomal protein bL36 family.

The sequence is that of Large ribosomal subunit protein bL36 from Lacticaseibacillus casei (strain BL23) (Lactobacillus casei).